The primary structure comprises 127 residues: Aspartate 1-decarboxylase (127 aa).

The active-site Schiff-base intermediate with substrate; via pyruvic acid is serine 25. The residue at position 25 (serine 25) is a Pyruvic acid (Ser). Residue threonine 57 coordinates substrate. Residue tyrosine 58 is the Proton donor of the active site. Position 73–75 (73–75 (GSA)) interacts with substrate.

This sequence belongs to the PanD family. As to quaternary structure, heterooctamer of four alpha and four beta subunits. Pyruvate serves as cofactor. Is synthesized initially as an inactive proenzyme, which is activated by self-cleavage at a specific serine bond to produce a beta-subunit with a hydroxyl group at its C-terminus and an alpha-subunit with a pyruvoyl group at its N-terminus.

It localises to the cytoplasm. It catalyses the reaction L-aspartate + H(+) = beta-alanine + CO2. It participates in cofactor biosynthesis; (R)-pantothenate biosynthesis; beta-alanine from L-aspartate: step 1/1. Catalyzes the pyruvoyl-dependent decarboxylation of aspartate to produce beta-alanine. The polypeptide is Aspartate 1-decarboxylase (Polaromonas naphthalenivorans (strain CJ2)).